A 128-amino-acid chain; its full sequence is Small ribosomal subunit protein bS6 (128 aa).

It belongs to the bacterial ribosomal protein bS6 family.

Its function is as follows. Binds together with bS18 to 16S ribosomal RNA. This chain is Small ribosomal subunit protein bS6, found in Thermotoga sp. (strain RQ2).